The primary structure comprises 261 residues: MRFLILFLALSLGEIDAAPPVQSRIVGGFNCEKNSQPWHVAVFRYNKYICGGVLLNPNWVLTAAHCYGNQYNVWLGKNKLFQHESSAQHRLVSKSFPHPDYNMSLMNDHTPHPEDDYSNDLMLLRLSKPADITDAVKPIDLPTEEPKLGSTCLASGWGSITPTKWQIPNDLQCGFIKPLPNENCAKAYIHKVTDVMLCAGEMGGGKDTCAGDSGGPLICDGVLQGITSWGSIPCAKPNAPAIYTKLIKFTSWIKDTMAKNP.

Residues 1–17 (MRFLILFLALSLGEIDA) form the signal peptide. Residues 18-24 (APPVQSR) constitute a propeptide, activation peptide. The Peptidase S1 domain maps to 25 to 258 (IVGGFNCEKN…FTSWIKDTMA (234 aa)). 5 cysteine pairs are disulfide-bonded: cysteine 31–cysteine 173, cysteine 50–cysteine 66, cysteine 152–cysteine 219, cysteine 184–cysteine 198, and cysteine 209–cysteine 234. Catalysis depends on histidine 65, which acts as the Charge relay system. An N-linked (GlcNAc...) asparagine glycan is attached at asparagine 102. Aspartate 120 acts as the Charge relay system in catalysis. Catalysis depends on serine 213, which acts as the Charge relay system.

It belongs to the peptidase S1 family. Kallikrein subfamily. As to expression, expressed in testis and submaxillary gland. In the testis, expression localized specifically to Leydig cells in the interstitial tissues.

The enzyme catalyses Preferential cleavage of Arg-|-Xaa bonds in small molecule substrates. Highly selective action to release kallidin (lysyl-bradykinin) from kininogen involves hydrolysis of Met-|-Xaa or Leu-|-Xaa.. With respect to regulation, inhibited by protease inhibitors diisopropylfluorophosphate, leupeptin, antipain, benzamidine, phenylmethylsulfonyl fluoride and soybean trypsin inhibitor. In terms of biological role, glandular kallikreins cleave Met-Lys and Arg-Ser bonds in kininogen to release Lys-bradykinin. Displays trypsin-like substrate specificity and shows activity towards casein, gelatin, fibronectin and IGFBP3. The protein is Kallikrein 1-related peptidase b21 (Klk1b21) of Mus musculus (Mouse).